An 863-amino-acid polypeptide reads, in one-letter code: MARRSSFQSCQIISLFTFAVGVNICLGFTAHRIKRAEGWEEGPPTVLSDSPWTNISGSCKGRCFELQEAGPPDCRCDNLCKSYTSCCHDFDELCLKTARGWECTKDRCGEVRNEENACHCSEDCLARGDCCTNYQVVCKGESHWVDDDCEEIKAAECPAGFVRPPLIIFSVDGFRASYMKKGSKVMPNIEKLRSCGTHSPYMRPVYPTKTFPNLYTLATGLYPESHGIVGNSMYDPVFDATFHLRGREKFNHRWWGGQPLWITATKQGVKAGTFFWSVVIPHERRILTILQWLTLPDHERPSVYAFYSEQPDFSGHKYGPFGPEMTNPLREIDKIVGQLMDGLKQLKLHRCVNVIFVGDHGMEDVTCDRTEFLSNYLTNVDDITLVPGTLGRIRSKFSNNAKYDPKAIIANLTCKKPDQHFKPYLKQHLPKRLHYANNRRIEDIHLLVERRWHVARKPLDVYKKPSGKCFFQGDHGFDNKVNSMQTVFVGYGSTFKYKTKVPPFENIELYNVMCDLLGLKPAPNNGTHGSLNHLLRTNTFRPTMPEEVTRPNYPGIMYLQSDFDLGCTCDDKVEPKNKLDELNKRLHTKGSTEERHLLYGRPAVLYRTRYDILYHTDFESGYSEIFLMPLWTSYTVSKQAEVSSVPDHLTSCVRPDVRVSPSFSQNCLAYKNDKQMSYGFLFPPYLSSSPEAKYDAFLVTNMVPMYPAFKRVWNYFQRVLVKKYASERNGVNVISGPIFDYDYDGLHDTEDKIKQYVEGSSIPVPTHYYSIITSCLDFTQPADKCDGPLSVSSFILPHRPDNEESCNSSEDESKWVEELMKMHTARVRDIEHLTSLDFFRKTSRSYPEILTLKTYLHTYESEI.

An N-terminal signal peptide occupies residues 1–27; it reads MARRSSFQSCQIISLFTFAVGVNICLG. Positions 28-35 are cleaved as a propeptide — removed by furin; sequence FTAHRIKR. Residue N54 is glycosylated (N-linked (GlcNAc...) asparagine). SMB domains are found at residues 55 to 98 and 99 to 143; these read ISGS…LKTA and RGWE…GESH. Cystine bridges form between C59–C76, C63–C94, C74–C87, C80–C86, C103–C120, C108–C138, C118–C131, C124–C130, C149–C195, and C157–C351. A Cell attachment site motif is present at residues 127–129; it reads RGD. Positions 145–502 are phosphodiesterase; that stretch reads VDDDCEEIKA…STFKYKTKVP (358 aa). D172 and T210 together coordinate Zn(2+). The active-site Nucleophile is the T210. Residues T210, N231, and D312 each coordinate 1-(9Z-octadecenoyl)-sn-glycero-3-phosphate. 1-hexadecanoyl-sn-glycero-3-phosphate contacts are provided by T210, N231, and D312. 3 residues coordinate 1-tetradecanoyl-sn-glycerol 3-phosphate: T210, N231, and D312. Zn(2+)-binding residues include D312, H316, D359, and H360. Intrachain disulfides connect C367-C469, C414-C806, C567-C667, C569-C652, and C775-C785. N411 carries an N-linked (GlcNAc...) asparagine glycan. Position 475 (H475) interacts with Zn(2+). H475 serves as a coordination point for 1-(9Z-octadecenoyl)-sn-glycero-3-phosphate. Residue H475 participates in 1-hexadecanoyl-sn-glycero-3-phosphate binding. 1-tetradecanoyl-sn-glycerol 3-phosphate is bound at residue H475. N525 is a glycosylation site (N-linked (GlcNAc...) asparagine). A nuclease-like domain region spans residues 598-863; sequence LYGRPAVLYR…TYLHTYESEI (266 aa). Ca(2+) is bound by residues D740, D742, D744, L746, and D748. N-linked (GlcNAc...) asparagine glycosylation occurs at N807. Positions 830–851 are required for secretion; it reads IEHLTSLDFFRKTSRSYPEILT.

Belongs to the nucleotide pyrophosphatase/phosphodiesterase family. Zn(2+) is required as a cofactor. Requires Ca(2+) as cofactor. N-glycosylation, but not furin-cleavage, plays a critical role on secretion and on lysoPLD activity. In terms of processing, the interdomain disulfide bond between Cys-414 and Cys-806 is essential for catalytic activity. In terms of tissue distribution, detected in blood plasma (at protein level). Predominantly expressed in brain, placenta, ovary, and small intestine. Expressed in a number of carcinomas such as hepatocellular and prostate carcinoma, neuroblastoma and non-small-cell lung cancer. Expressed in body fluids such as plasma, cerebral spinal fluid (CSF), saliva, follicular and amniotic fluids. Not detected in leukocytes. Isoform 1 is more highly expressed in peripheral tissues than in the central nervous system (CNS). Adipocytes only express isoform 1. Isoform 3 is more highly expressed in the brain than in peripheral tissues.

It is found in the secreted. It catalyses the reaction a 1-O-alkyl-sn-glycero-3-phosphoethanolamine + H2O = a 1-O-alkyl-sn-glycero-3-phosphate + ethanolamine + H(+). It carries out the reaction a 1-acyl-sn-glycero-3-phosphoethanolamine + H2O = a 1-acyl-sn-glycero-3-phosphate + ethanolamine + H(+). The enzyme catalyses 1-(9Z-octadecenoyl)-sn-glycero-3-phosphoethanolamine + H2O = 1-(9Z-octadecenoyl)-sn-glycero-3-phosphate + ethanolamine + H(+). The catalysed reaction is a 1-O-alkyl-sn-glycero-3-phosphocholine + H2O = a 1-O-alkyl-sn-glycero-3-phosphate + choline + H(+). It catalyses the reaction 1-O-(9Z-octadecenyl)-sn-glycero-3-phosphocholine + H2O = 1-O-(9Z-octadecenyl)-sn-glycero-3-phosphate + choline + H(+). It carries out the reaction 1-O-hexadecyl-sn-glycero-3-phosphocholine + H2O = 1-O-hexadecyl-sn-glycero-3-phosphate + choline + H(+). The enzyme catalyses a 1-O-(1Z-alkenyl)-sn-glycero-3-phosphocholine + H2O = a 1-O-(1Z-alkenyl)-sn-glycero-3-phosphate + choline + H(+). The catalysed reaction is a 1-acyl-sn-glycero-3-phosphocholine + H2O = a 1-acyl-sn-glycero-3-phosphate + choline + H(+). It catalyses the reaction 1-dodecanoyl-sn-glycero-3-phosphocholine + H2O = 1-dodecanoyl-sn-glycerol 3-phosphate + choline + H(+). It carries out the reaction 1-(9Z-octadecenoyl)-sn-glycero-3-phosphocholine + H2O = 1-(9Z-octadecenoyl)-sn-glycero-3-phosphate + choline + H(+). The enzyme catalyses 1-tetradecanoyl-sn-glycero-3-phosphocholine + H2O = 1-tetradecanoyl-sn-glycerol 3-phosphate + choline + H(+). The catalysed reaction is 1-decanoyl-sn-glycero-3-phosphocholine + H2O = 1-decanoyl-sn-glycero-3-phosphate + choline + H(+). It catalyses the reaction 1-octadecanoyl-sn-glycero-3-phosphocholine + H2O = 1-octadecanoyl-sn-glycero-3-phosphate + choline + H(+). It carries out the reaction 1-hexadecanoyl-sn-glycero-3-phosphocholine + H2O = 1-hexadecanoyl-sn-glycero-3-phosphate + choline + H(+). The enzyme catalyses 1-hexanoyl-sn-glycero-3-phosphocholine + H2O = 1-hexanoyl-sn-glycero-3-phosphate + choline + H(+). The catalysed reaction is 1-(9Z,12Z)-octadecadienoyl-sn-glycero-3-phosphocholine + H2O = 1-(9Z,12Z)-octadecadienoyl-sn-glycero-3-phosphate + choline + H(+). It catalyses the reaction sphing-4-enine-phosphocholine + H2O = sphing-4-enine 1-phosphate + choline + H(+). It carries out the reaction 1-(5Z,8Z,11Z,14Z-eicosatetraenoyl)-sn-glycero-3-phosphocholine + H2O = 1-(5Z,8Z,11Z,14Z-eicosatetraenoyl)-sn-glycero-3-phosphate + choline + H(+). The enzyme catalyses a 2-acyl-sn-glycero-3-phosphocholine + H2O = a 2-acyl-sn-glycerol 3-phosphate + choline + H(+). The catalysed reaction is a 1,2-diacyl-sn-glycero-3-phosphocholine + H2O = a 1,2-diacyl-sn-glycero-3-phosphate + choline + H(+). It catalyses the reaction 1,2-dioctanoyl-sn-glycero-3-phosphocholine + H2O = 1,2-dioctanoyl-sn-glycero-3-phosphate + choline + H(+). It carries out the reaction 1,2-didecanoyl-sn-glycero-3-phosphocholine + H2O = 1,2-didecanoyl-sn-glycero-3-phosphate + choline + H(+). The enzyme catalyses a 1-acyl-sn-glycero-3-phospho-L-serine + H2O = a 1-acyl-sn-glycero-3-phosphate + L-serine + H(+). The catalysed reaction is 1-(9Z-octadecenoyl)-sn-glycero-3-phospho-L-serine + H2O = 1-(9Z-octadecenoyl)-sn-glycero-3-phosphate + L-serine + H(+). It catalyses the reaction a 2-acyl-sn-glycero-3-phospho-L-serine + H2O = a 2-acyl-sn-glycerol 3-phosphate + L-serine + H(+). Its activity is regulated as follows. Inhibited by lysophosphatidic acid (LPA) and sphingosine-1-phosphate (S1P). Inhibited by EDTA and EGTA. In terms of biological role, secreted lysophospholipase D that hydrolyzes lysophospholipids to produce the signaling molecule lysophosphatidic acid (LPA) in extracellular fluids. Its major substrate is lysophosphatidylcholine. Can also act on sphingosylphosphorylcholine producing sphingosine-1-phosphate, a modulator of cell motility. Can hydrolyze, in vitro, bis-pNPP, to some extent pNP-TMP, and barely ATP. Involved in several motility-related processes such as angiogenesis and neurite outgrowth. Acts as an angiogenic factor by stimulating migration of smooth muscle cells and microtubule formation. Stimulates migration of melanoma cells, probably via a pertussis toxin-sensitive G protein. May have a role in induction of parturition. Possible involvement in cell proliferation and adipose tissue development. Required for LPA production in activated platelets, cleaves the sn-1 lysophospholipids to generate sn-1 lysophosphatidic acids containing predominantly 18:2 and 20:4 fatty acids. Shows a preference for the sn-1 to the sn-2 isomer of 1-O-alkyl-sn-glycero-3-phosphocholine (lyso-PAF). This chain is Autotaxin, found in Homo sapiens (Human).